Reading from the N-terminus, the 134-residue chain is Small ribosomal subunit protein bS16 (134 aa).

The segment at 105 to 134 (QNERREKRLAIKTRRRQAKKAAEAEGQESA) is disordered. Over residues 114 to 123 (AIKTRRRQAK) the composition is skewed to basic residues.

Belongs to the bacterial ribosomal protein bS16 family.

The polypeptide is Small ribosomal subunit protein bS16 (Chlorobium phaeobacteroides (strain BS1)).